The chain runs to 219 residues: Large ribosomal subunit protein uL3 (219 aa).

Belongs to the universal ribosomal protein uL3 family. In terms of assembly, part of the 50S ribosomal subunit. Forms a cluster with proteins L14 and L19.

Its function is as follows. One of the primary rRNA binding proteins, it binds directly near the 3'-end of the 23S rRNA, where it nucleates assembly of the 50S subunit. This chain is Large ribosomal subunit protein uL3, found in Salinispora tropica (strain ATCC BAA-916 / DSM 44818 / JCM 13857 / NBRC 105044 / CNB-440).